A 122-amino-acid chain; its full sequence is UPF0145 protein BamMC406_5002 (122 aa).

It belongs to the UPF0145 family.

The chain is UPF0145 protein BamMC406_5002 from Burkholderia ambifaria (strain MC40-6).